A 335-amino-acid polypeptide reads, in one-letter code: NADH-quinone oxidoreductase subunit H (335 aa).

Transmembrane regions (helical) follow at residues 15–35 (VVKAIVVLLAVVVCGALLSFV), 81–101 (MIFTLAPVVAMSALLIGFSII), 114–134 (IGLLFFFAMAGLSVYAVLFAG), 154–174 (VSYEVFLGLALMGVVVQVGSF), 187–207 (LWFIIPQFFGFCTFFIAGVAV), 238–258 (FFVGEYIGIILISALLVTLFF), 270–290 (QVPFLWFALKTAFFIMLFILL), and 307–327 (WKFCLPLTLINLLVTAAIVLY).

Belongs to the complex I subunit 1 family. NDH-1 is composed of 13 different subunits. Subunits NuoA, H, J, K, L, M, N constitute the membrane sector of the complex.

The protein localises to the cell inner membrane. The catalysed reaction is a quinone + NADH + 5 H(+)(in) = a quinol + NAD(+) + 4 H(+)(out). Its function is as follows. NDH-1 shuttles electrons from NADH, via FMN and iron-sulfur (Fe-S) centers, to quinones in the respiratory chain. The immediate electron acceptor for the enzyme in this species is believed to be ubiquinone. Couples the redox reaction to proton translocation (for every two electrons transferred, four hydrogen ions are translocated across the cytoplasmic membrane), and thus conserves the redox energy in a proton gradient. This subunit may bind ubiquinone. The sequence is that of NADH-quinone oxidoreductase subunit H from Pseudomonas putida (strain GB-1).